The primary structure comprises 238 residues: 7-cyano-7-deazaguanine synthase 1 (238 aa).

14-24 (FSGGQDSATCL) is a binding site for ATP. Positions 202, 217, 220, and 223 each coordinate Zn(2+).

The protein belongs to the QueC family. The cofactor is Zn(2+).

It catalyses the reaction 7-carboxy-7-deazaguanine + NH4(+) + ATP = 7-cyano-7-deazaguanine + ADP + phosphate + H2O + H(+). It functions in the pathway purine metabolism; 7-cyano-7-deazaguanine biosynthesis. In terms of biological role, catalyzes the ATP-dependent conversion of 7-carboxy-7-deazaguanine (CDG) to 7-cyano-7-deazaguanine (preQ(0)). In Rhodopseudomonas palustris (strain HaA2), this protein is 7-cyano-7-deazaguanine synthase 1.